We begin with the raw amino-acid sequence, 152 residues long: Endoribonuclease YbeY (152 aa).

The Zn(2+) site is built by histidine 113, histidine 117, and histidine 123.

This sequence belongs to the endoribonuclease YbeY family. It depends on Zn(2+) as a cofactor.

It localises to the cytoplasm. Functionally, single strand-specific metallo-endoribonuclease involved in late-stage 70S ribosome quality control and in maturation of the 3' terminus of the 16S rRNA. This Delftia acidovorans (strain DSM 14801 / SPH-1) protein is Endoribonuclease YbeY.